Consider the following 104-residue polypeptide: L-rhamnose mutarotase (104 aa).

Tyrosine 18 contributes to the substrate binding site. Catalysis depends on histidine 22, which acts as the Proton donor. Substrate contacts are provided by residues tyrosine 41 and tryptophan 76–tryptophan 77.

This sequence belongs to the rhamnose mutarotase family. Homodimer.

Its subcellular location is the cytoplasm. It catalyses the reaction alpha-L-rhamnose = beta-L-rhamnose. Its pathway is carbohydrate metabolism; L-rhamnose metabolism. Involved in the anomeric conversion of L-rhamnose. This is L-rhamnose mutarotase from Listeria monocytogenes serotype 4b (strain F2365).